The following is a 400-amino-acid chain: Acetate kinase (400 aa).

Asn9 contributes to the Mg(2+) binding site. Residue Lys16 coordinates ATP. Arg90 contacts substrate. Asp147 serves as the catalytic Proton donor/acceptor. Residues 207 to 211, 282 to 284, and 330 to 334 contribute to the ATP site; these read HIGNG, DLR, and GIGEN. Glu385 provides a ligand contact to Mg(2+).

This sequence belongs to the acetokinase family. Homodimer. Mg(2+) serves as cofactor. Requires Mn(2+) as cofactor.

The protein resides in the cytoplasm. It carries out the reaction acetate + ATP = acetyl phosphate + ADP. Its pathway is metabolic intermediate biosynthesis; acetyl-CoA biosynthesis; acetyl-CoA from acetate: step 1/2. Functionally, catalyzes the formation of acetyl phosphate from acetate and ATP. Can also catalyze the reverse reaction. This is Acetate kinase from Staphylococcus aureus (strain JH1).